A 264-amino-acid polypeptide reads, in one-letter code: Orotidine 5'-phosphate decarboxylase (264 aa).

Substrate is bound by residues Asp-37, 59–61, 91–100, Tyr-217, and Arg-235; these read KTH and DRKFADIGNT. Residue Lys-93 is the Proton donor of the active site.

It belongs to the OMP decarboxylase family.

The enzyme catalyses orotidine 5'-phosphate + H(+) = UMP + CO2. It participates in pyrimidine metabolism; UMP biosynthesis via de novo pathway; UMP from orotate: step 2/2. This Torulaspora delbrueckii (Yeast) protein is Orotidine 5'-phosphate decarboxylase (URA3).